The chain runs to 417 residues: Gamma-glutamyl phosphate reductase (417 aa).

It belongs to the gamma-glutamyl phosphate reductase family.

The protein resides in the cytoplasm. The catalysed reaction is L-glutamate 5-semialdehyde + phosphate + NADP(+) = L-glutamyl 5-phosphate + NADPH + H(+). The protein operates within amino-acid biosynthesis; L-proline biosynthesis; L-glutamate 5-semialdehyde from L-glutamate: step 2/2. In terms of biological role, catalyzes the NADPH-dependent reduction of L-glutamate 5-phosphate into L-glutamate 5-semialdehyde and phosphate. The product spontaneously undergoes cyclization to form 1-pyrroline-5-carboxylate. In Cronobacter sakazakii (strain ATCC BAA-894) (Enterobacter sakazakii), this protein is Gamma-glutamyl phosphate reductase.